A 408-amino-acid polypeptide reads, in one-letter code: Succinylornithine transaminase (408 aa).

The residue at position 252 (lysine 252) is an N6-(pyridoxal phosphate)lysine.

The protein belongs to the class-III pyridoxal-phosphate-dependent aminotransferase family. AstC subfamily. Pyridoxal 5'-phosphate serves as cofactor.

It carries out the reaction N(2)-succinyl-L-ornithine + 2-oxoglutarate = N-succinyl-L-glutamate 5-semialdehyde + L-glutamate. It functions in the pathway amino-acid degradation; L-arginine degradation via AST pathway; L-glutamate and succinate from L-arginine: step 3/5. In terms of biological role, catalyzes the transamination of N(2)-succinylornithine and alpha-ketoglutarate into N(2)-succinylglutamate semialdehyde and glutamate. Can also act as an acetylornithine aminotransferase. This is Succinylornithine transaminase from Salmonella paratyphi B (strain ATCC BAA-1250 / SPB7).